The primary structure comprises 512 residues: UDP-N-acetylmuramoyl-L-alanyl-D-glutamate--2,6-diaminopimelate ligase (512 aa).

Serine 32 is a UDP-N-acetyl-alpha-D-muramoyl-L-alanyl-D-glutamate binding site. 114-120 contacts ATP; it reads GTNGKTT. UDP-N-acetyl-alpha-D-muramoyl-L-alanyl-D-glutamate contacts are provided by residues 156-157, serine 183, and arginine 191; that span reads TT. Lysine 223 is subject to N6-carboxylysine. Meso-2,6-diaminopimelate contacts are provided by residues arginine 395, 419 to 422, glycine 469, and glutamate 473; that span reads DNPR. A Meso-diaminopimelate recognition motif motif is present at residues 419–422; sequence DNPR.

The protein belongs to the MurCDEF family. MurE subfamily. The cofactor is Mg(2+). Post-translationally, carboxylation is probably crucial for Mg(2+) binding and, consequently, for the gamma-phosphate positioning of ATP.

It is found in the cytoplasm. It carries out the reaction UDP-N-acetyl-alpha-D-muramoyl-L-alanyl-D-glutamate + meso-2,6-diaminopimelate + ATP = UDP-N-acetyl-alpha-D-muramoyl-L-alanyl-gamma-D-glutamyl-meso-2,6-diaminopimelate + ADP + phosphate + H(+). It participates in cell wall biogenesis; peptidoglycan biosynthesis. Its function is as follows. Catalyzes the addition of meso-diaminopimelic acid to the nucleotide precursor UDP-N-acetylmuramoyl-L-alanyl-D-glutamate (UMAG) in the biosynthesis of bacterial cell-wall peptidoglycan. The protein is UDP-N-acetylmuramoyl-L-alanyl-D-glutamate--2,6-diaminopimelate ligase of Chlorobium phaeobacteroides (strain DSM 266 / SMG 266 / 2430).